Reading from the N-terminus, the 382-residue chain is Pyrimidine monooxygenase RutA (382 aa).

FMN is bound by residues 68–69, Asn134, Glu143, 159–160, and Ser209; these read IK and RY.

It belongs to the NtaA/SnaA/DszA monooxygenase family. RutA subfamily.

The catalysed reaction is uracil + FMNH2 + NADH + O2 = (Z)-3-ureidoacrylate + FMN + NAD(+) + H2O + H(+). It carries out the reaction thymine + FMNH2 + NADH + O2 = (Z)-2-methylureidoacrylate + FMN + NAD(+) + H2O + H(+). Its function is as follows. Catalyzes the pyrimidine ring opening between N-3 and C-4 by an unusual flavin hydroperoxide-catalyzed mechanism, adding oxygen atoms in the process to yield ureidoacrylate peracid, that immediately reacts with FMN forming ureidoacrylate and FMN-N(5)-oxide. The FMN-N(5)-oxide reacts spontaneously with NADH to produce FMN. Requires the flavin reductase RutF to regenerate FMN in vivo. This chain is Pyrimidine monooxygenase RutA, found in Escherichia coli O8 (strain IAI1).